The sequence spans 893 residues: Eukaryotic translation initiation factor 3 subunit A (893 aa).

The PCI domain maps to 319–502; the sequence is LQRMAAHVLL…NSIFFGTDLT (184 aa). Coiled coils occupy residues 576-707 and 784-881; these read QKII…RAKR and EIAL…REVA. Disordered stretches follow at residues 592 to 634 and 837 to 893; these read AREL…EIQA and AEAR…RRRQ. Basic and acidic residues predominate over residues 837 to 881; that stretch reads AEARRLEREAEDEKRRQQYEKQRAKEEEAERKIQEDRDRLAREVA.

The protein belongs to the eIF-3 subunit A family. As to quaternary structure, component of the eukaryotic translation initiation factor 3 (eIF-3) complex. The eIF-3 complex interacts with pix.

The protein resides in the cytoplasm. Its function is as follows. RNA-binding component of the eukaryotic translation initiation factor 3 (eIF-3) complex, which is involved in protein synthesis of a specialized repertoire of mRNAs and, together with other initiation factors, stimulates binding of mRNA and methionyl-tRNAi to the 40S ribosome. The eIF-3 complex specifically targets and initiates translation of a subset of mRNAs involved in cell proliferation. This Drosophila grimshawi (Hawaiian fruit fly) protein is Eukaryotic translation initiation factor 3 subunit A.